Reading from the N-terminus, the 416-residue chain is Proline-serine-threonine phosphatase-interacting protein 1 (416 aa).

The F-BAR domain maps to 5 to 264 (LQFKDAFWCR…TLEGCSIDAD (260 aa)). Residues 166 to 212 (HQKQVEKSQNKARQCKDSATEAERVYRQSIAQLEKVRAEWEQEHRTT) are a coiled coil. A Phosphoserine modification is found at Ser318. Tyr345 bears the Phosphotyrosine mark. Residues 359–416 (SPAQEYRALYDYTAQNPDELDLSAGDILEVILEGEDGWWTVERNGQRGFVPGSYLEKL) enclose the SH3 domain.

In terms of assembly, homodimer. Homotrimer. Interacts (via coiled-coil domain) with CD2AP, PTPN12 and PTPN18. Interacts (via SH3 domain) with ABL1 and WAS. Interacts (via SH3 and coiled-coil domains) with MEFV (via B-box zinc finger); the interaction allows binding of MEFV to PYCARD and facilitates formation of PYCARD pyroptosomes. Interacts with CD2, DNM2 and FASLG. Post-translationally, dephosphorylated on Tyr-345 by PTPN18, this event negatively regulates the association of PSTPIP1 with SH2 domain-containing proteins as tyrosine kinase. Phosphorylation of Tyr-345 is probably required for subsequent phosphorylation at other tyrosine residues. Phosphorylation is induced by activation of the EGFR and PDGFR in a ABL1 dependent manner. The phosphorylation regulates the interaction with WAS and with MEFV. In terms of tissue distribution, highly expressed in the peripheral blood leukocytes, granulocytes and monocytes, namely in T-cells and natural killer cells, and in spleen. Weakly expressed in the thymus, small intestine, lung and placenta.

It is found in the cytoplasm. The protein resides in the cell membrane. Its subcellular location is the cell projection. It localises to the uropodium. The protein localises to the cytoskeleton. It is found in the perinuclear region. The protein resides in the lamellipodium. Its subcellular location is the cleavage furrow. Involved in regulation of the actin cytoskeleton. May regulate WAS actin-bundling activity. Bridges the interaction between ABL1 and PTPN18 leading to ABL1 dephosphorylation. May play a role as a scaffold protein between PTPN12 and WAS and allow PTPN12 to dephosphorylate WAS. Has the potential to physically couple CD2 and CD2AP to WAS. Acts downstream of CD2 and CD2AP to recruit WAS to the T-cell:APC contact site so as to promote the actin polymerization required for synapse induction during T-cell activation. Down-regulates CD2-stimulated adhesion through the coupling of PTPN12 to CD2. Also has a role in innate immunity and the inflammatory response. Recruited to inflammasomes by MEFV. Induces formation of pyroptosomes, large supramolecular structures composed of oligomerized PYCARD dimers which form prior to inflammatory apoptosis. Binding to MEFV allows MEFV to bind to PYCARD and facilitates pyroptosome formation. Regulates endocytosis and cell migration in neutrophils. The polypeptide is Proline-serine-threonine phosphatase-interacting protein 1 (PSTPIP1) (Homo sapiens (Human)).